A 486-amino-acid polypeptide reads, in one-letter code: MQIYNTLARAKEEFIPRDKGHVSMYVCGPTTYNFIHLGNARPLVFFDTVRRYFLYKGYKVDYVQNFTDVDDKIINRAAEEKIDPLELAQKYIQEFFVDADALNVMRADTHPKVSEHIEEIIDLIKRLEDQGHAYVVDGDVYFAVRSFAEYGKLSGRSLEDMQAGARVEVDPRKKDPMDFALWKAAKPGEPSWDSPWGSGRPGWHIECSAMAEKYLGNGFDIHGGGFDLIFPHHENEIAQSEAACKAPFARYWMHNGFITINQEKMSKSLGNFFLVREILAKFPPDVVRWYLLSTHYRSPLDFDDEKLVMSGKGLERIKTALRLLYEAMDLPVYEGEDIQGAENFEETLQRIRLEFEKAMDDDFNTALAISYFFDLAKEVNIYVGKLNSKVTLEMRKILDQAHTLIKDFNRVLGILKEDKMTGKLLIEMAGADDTLTEGLVQLIIKIRQEARSKKDWSTADAIRDGLKELGVVLEDTPQGVRWKKQG.

C27 provides a ligand contact to Zn(2+). Positions 29 to 39 match the 'HIGH' region motif; the sequence is PTTYNFIHLGN. Residues C207, H232, and E236 each coordinate Zn(2+). Positions 264-268 match the 'KMSKS' region motif; it reads KMSKS. K267 serves as a coordination point for ATP.

The protein belongs to the class-I aminoacyl-tRNA synthetase family. In terms of assembly, monomer. Requires Zn(2+) as cofactor.

The protein resides in the cytoplasm. The enzyme catalyses tRNA(Cys) + L-cysteine + ATP = L-cysteinyl-tRNA(Cys) + AMP + diphosphate. This is Cysteine--tRNA ligase from Desulforamulus reducens (strain ATCC BAA-1160 / DSM 100696 / MI-1) (Desulfotomaculum reducens).